A 28-amino-acid polypeptide reads, in one-letter code: 14-3-3-like protein 4 (28 aa).

The protein belongs to the 14-3-3 family.

This Pseudotsuga menziesii (Douglas-fir) protein is 14-3-3-like protein 4.